The following is a 207-amino-acid chain: Protein Nef (207 aa).

Glycine 2 carries N-myristoyl glycine; by host lipidation. Position 6 is a phosphoserine; by host (serine 6). The interval 62-66 (EEDSD) is acidic; interacts with host PACS1 and PACS2; stabilizes the interaction of NEF/MHC-I with host AP1M1; necessary for MHC-I internalization. The interval 70–79 (PVRPQVPLRP) is SH3-binding; interaction with Src family tyrosine kinases. The PxxP; stabilizes the interaction of NEF/MHC-I with host AP1M1; necessary for MHC-I internalization motif lies at 73 to 76 (PQVP). Positions 109–125 (DILDLWVYNTQGFFPDW) are mediates dimerization, Nef-PTE1 interaction. The tract at residues 149 to 181 (MDPAEIEEANKGENISLLHPICQHGMEDEDREV) is binding to ATP6V1H. Residues 165 to 166 (LL) carry the Dileucine internalization motif; necessary for CD4 internalization motif. The Diacidic; necessary for CD4 internalization motif lies at 175 to 176 (ED).

Belongs to the lentivirus primate group Nef protein family. Monomer; cytosolic form. Homodimer; membrane bound form. Interacts with Nef associated p21-activated kinase (PAK2); this interaction activates PAK2. Associates with the Nef-MHC-I-AP1 complex; this complex is required for MHC-I internalization. Interacts (via C-terminus) with host PI3-kinase. Interacts with host PACS1; this interaction seems to be weak. Interacts with host PACS2. Interacts with host LCK and MAPK3; these interactions inhibit the kinase activity of the latter. Interacts with host ATP6V1H; this interaction may play a role in CD4 endocytosis. Associates with the CD4-Nef-AP2 complex; this complex is required for CD4 internalization. Interacts with host AP2 subunit alpha and AP2 subunit sigma2. Interacts with TCR-zeta chain; this interaction up-regulates the Fas ligand (FasL) surface expression. Interacts with host HCK, LYN, and SRC; these interactions activate the Src family kinases. Interacts with MAP3K5; this interaction inhibits the Fas and TNFR-mediated death signals. Interacts with beta-COP and PTE1. Interacts with human RACK1; this increases Nef phosphorylation by PKC. Interacts with TP53; this interaction decreases the half-life of TP53, protecting the infected cell against p53-mediated apoptosis. Post-translationally, the virion-associated Nef proteins are cleaved by the viral protease to release the soluble C-terminal core protein. Nef is probably cleaved concomitantly with viral structural proteins on maturation of virus particles. Myristoylated. In terms of processing, phosphorylated on serine residues, probably by host PKCdelta and theta.

Its subcellular location is the host cell membrane. It is found in the virion. It localises to the secreted. The protein resides in the host Golgi apparatus membrane. Factor of infectivity and pathogenicity, required for optimal virus replication. Alters numerous pathways of T-lymphocyte function and down-regulates immunity surface molecules in order to evade host defense and increase viral infectivity. Alters the functionality of other immunity cells, like dendritic cells, monocytes/macrophages and NK cells. Functionally, in infected CD4(+) T-lymphocytes, down-regulates the surface MHC-I, mature MHC-II, CD4, CD28, CCR5 and CXCR4 molecules. Mediates internalization and degradation of host CD4 through the interaction of with the cytoplasmic tail of CD4, the recruitment of AP-2 (clathrin adapter protein complex 2), internalization through clathrin coated pits, and subsequent transport to endosomes and lysosomes for degradation. Diverts host MHC-I molecules to the trans-Golgi network-associated endosomal compartments by an endocytic pathway to finally target them for degradation. MHC-I down-regulation may involve AP-1 (clathrin adapter protein complex 1) or possibly Src family kinase-ZAP70/Syk-PI3K cascade recruited by PACS2. In consequence infected cells are masked for immune recognition by cytotoxic T-lymphocytes. Decreasing the number of immune receptors also prevents reinfection by more HIV particles (superinfection). Down-regulates host SERINC3 and SERINC5 thereby excluding these proteins from the viral particles. Virion infectivity is drastically higher when SERINC3 or SERINC5 are excluded from the viral envelope, because these host antiviral proteins impair the membrane fusion event necessary for subsequent virion penetration. Its function is as follows. Bypasses host T-cell signaling by inducing a transcriptional program nearly identical to that of anti-CD3 cell activation. Interaction with TCR-zeta chain up-regulates the Fas ligand (FasL). Increasing surface FasL molecules and decreasing surface MHC-I molecules on infected CD4(+) cells send attacking cytotoxic CD8+ T-lymphocytes into apoptosis. In terms of biological role, plays a role in optimizing the host cell environment for viral replication without causing cell death by apoptosis. Protects the infected cells from apoptosis in order to keep them alive until the next virus generation is ready to strike. Inhibits the Fas and TNFR-mediated death signals by blocking MAP3K5/ASK1. Decreases the half-life of TP53, protecting the infected cell against p53-mediated apoptosis. Inhibits the apoptotic signals regulated by the Bcl-2 family proteins through the formation of a Nef/PI3-kinase/PAK2 complex that leads to activation of PAK2 and induces phosphorylation of host BAD. Extracellular Nef protein targets CD4(+) T-lymphocytes for apoptosis by interacting with CXCR4 surface receptors. The polypeptide is Protein Nef (Homo sapiens (Human)).